The primary structure comprises 91 residues: Protein translocase subunit SecG (91 aa).

2 helical membrane passes run 16-36 and 71-91; these read HTFL…VVLL and LTII…YLGM.

The protein belongs to the SecG family. As to quaternary structure, component of the Sec protein translocase complex. Heterotrimer consisting of SecY, SecE and SecG subunits. The heterotrimers can form oligomers, although 1 heterotrimer is thought to be able to translocate proteins. Interacts with SecDF, and other proteins may be involved. The channel interacts with SecA via subunit SecY. Also part of the accessory SecA2/SecY2 protein translocation apparatus required to export cell wall protein GspB.

The protein localises to the cell membrane. Its function is as follows. Subunit of the protein translocation channel SecYEG. While not essential, it considerably increases the export efficiency of extracellular proteins. The chain is Protein translocase subunit SecG from Staphylococcus aureus (strain NCTC 8325 / PS 47).